A 165-amino-acid polypeptide reads, in one-letter code: UPF0303 protein Rleg2_2653 (165 aa).

This sequence belongs to the UPF0303 family.

This is UPF0303 protein Rleg2_2653 from Rhizobium leguminosarum bv. trifolii (strain WSM2304).